A 472-amino-acid polypeptide reads, in one-letter code: Ribulose bisphosphate carboxylase large chain (472 aa).

The substrate site is built by asparagine 116 and threonine 166. Residue lysine 168 is the Proton acceptor of the active site. Lysine 170 is a binding site for substrate. Lysine 194, aspartate 196, and glutamate 197 together coordinate Mg(2+). Lysine 194 is modified (N6-carboxylysine). Catalysis depends on histidine 287, which acts as the Proton acceptor. Positions 288, 320, and 372 each coordinate substrate.

It belongs to the RuBisCO large chain family. Type I subfamily. In terms of assembly, heterohexadecamer of 8 large chains and 8 small chains. Mg(2+) is required as a cofactor.

The catalysed reaction is 2 (2R)-3-phosphoglycerate + 2 H(+) = D-ribulose 1,5-bisphosphate + CO2 + H2O. It carries out the reaction D-ribulose 1,5-bisphosphate + O2 = 2-phosphoglycolate + (2R)-3-phosphoglycerate + 2 H(+). In terms of biological role, ruBisCO catalyzes two reactions: the carboxylation of D-ribulose 1,5-bisphosphate, the primary event in carbon dioxide fixation, as well as the oxidative fragmentation of the pentose substrate. Both reactions occur simultaneously and in competition at the same active site. This chain is Ribulose bisphosphate carboxylase large chain, found in Nitrobacter vulgaris.